The primary structure comprises 332 residues: Phosphate acetyltransferase (332 aa).

This sequence belongs to the phosphate acetyltransferase and butyryltransferase family.

It localises to the cytoplasm. The enzyme catalyses acetyl-CoA + phosphate = acetyl phosphate + CoA. The protein operates within metabolic intermediate biosynthesis; acetyl-CoA biosynthesis; acetyl-CoA from acetate: step 2/2. The protein is Phosphate acetyltransferase (pta) of Acetivibrio thermocellus (strain ATCC 27405 / DSM 1237 / JCM 9322 / NBRC 103400 / NCIMB 10682 / NRRL B-4536 / VPI 7372) (Clostridium thermocellum).